A 205-amino-acid polypeptide reads, in one-letter code: Regulatory protein RecX (205 aa).

The protein belongs to the RecX family.

It is found in the cytoplasm. In terms of biological role, modulates RecA activity. The sequence is that of Regulatory protein RecX from Finegoldia magna (strain ATCC 29328 / DSM 20472 / WAL 2508) (Peptostreptococcus magnus).